We begin with the raw amino-acid sequence, 27 residues long: Toxin Bcg III 21.00 (27 aa).

Its subcellular location is the secreted. It localises to the nematocyst. In terms of biological role, possible voltage-gated potassium channel (Kv) blocker. This is Toxin Bcg III 21.00 from Bunodosoma cangicum (Sea anemone).